We begin with the raw amino-acid sequence, 581 residues long: Arginine--tRNA ligase (581 aa).

The 'HIGH' region signature appears at 126–136 (PNLAKEMHVGH).

The protein belongs to the class-I aminoacyl-tRNA synthetase family. In terms of assembly, monomer.

It localises to the cytoplasm. It catalyses the reaction tRNA(Arg) + L-arginine + ATP = L-arginyl-tRNA(Arg) + AMP + diphosphate. This Shewanella sp. (strain ANA-3) protein is Arginine--tRNA ligase.